A 243-amino-acid polypeptide reads, in one-letter code: Probable ubiquitin-conjugating enzyme E2 33 (243 aa).

Residues Ala-5–Gln-162 form the UBC core domain. The Glycyl thioester intermediate role is filled by Cys-87. The disordered stretch occupies residues Glu-168 to Val-197. The span at Pro-184 to Val-197 shows a compositional bias: basic and acidic residues. Residues Leu-220–Leu-240 form a helical membrane-spanning segment.

Belongs to the ubiquitin-conjugating enzyme family.

The protein resides in the membrane. It carries out the reaction S-ubiquitinyl-[E1 ubiquitin-activating enzyme]-L-cysteine + [E2 ubiquitin-conjugating enzyme]-L-cysteine = [E1 ubiquitin-activating enzyme]-L-cysteine + S-ubiquitinyl-[E2 ubiquitin-conjugating enzyme]-L-cysteine.. It participates in protein modification; protein ubiquitination. Accepts the ubiquitin from the E1 complex and catalyzes its covalent attachment to other proteins. The protein is Probable ubiquitin-conjugating enzyme E2 33 (UBC33) of Arabidopsis thaliana (Mouse-ear cress).